The following is a 373-amino-acid chain: Putative aminopeptidase SgcX (373 aa).

The a divalent metal cation site is built by His67 and Asp180. Glu212 functions as the Proton acceptor in the catalytic mechanism. Residues Glu213, Asp235, and His329 each coordinate a divalent metal cation.

Belongs to the peptidase M42 family. A divalent metal cation serves as cofactor.

The sequence is that of Putative aminopeptidase SgcX (sgcX) from Escherichia coli (strain K12).